The following is a 529-amino-acid chain: Peptide chain release factor 3 (529 aa).

The tr-type G domain maps to 11-280 (KKRRTFAIIS…GLVEWAPAPL (270 aa)). GTP is bound by residues 20–27 (SHPDAGKT), 88–92 (DTPGH), and 142–145 (NKLD).

This sequence belongs to the TRAFAC class translation factor GTPase superfamily. Classic translation factor GTPase family. PrfC subfamily.

It localises to the cytoplasm. Its function is as follows. Increases the formation of ribosomal termination complexes and stimulates activities of RF-1 and RF-2. It binds guanine nucleotides and has strong preference for UGA stop codons. It may interact directly with the ribosome. The stimulation of RF-1 and RF-2 is significantly reduced by GTP and GDP, but not by GMP. The polypeptide is Peptide chain release factor 3 (Alteromonas mediterranea (strain DSM 17117 / CIP 110805 / LMG 28347 / Deep ecotype)).